A 34-amino-acid chain; its full sequence is MTYMKLTAAKRIVFFIYLFVIQFWKNASFQTKVS.

A helical transmembrane segment spans residues 7–24 (TAAKRIVFFIYLFVIQFW).

The protein resides in the membrane. The chain is Putative protein YmiB (ymiB) from Escherichia coli (strain K12).